Reading from the N-terminus, the 273-residue chain is NH(3)-dependent NAD(+) synthetase (273 aa).

Position 46–53 (46–53 (GISGGQDS)) interacts with ATP. A Mg(2+)-binding site is contributed by aspartate 52. Deamido-NAD(+) is bound at residue arginine 139. An ATP-binding site is contributed by threonine 159. Glutamate 164 contacts Mg(2+). Deamido-NAD(+) is bound by residues lysine 172 and aspartate 179. ATP contacts are provided by lysine 188 and threonine 210. 259 to 260 (HK) is a deamido-NAD(+) binding site.

This sequence belongs to the NAD synthetase family. As to quaternary structure, homodimer.

It catalyses the reaction deamido-NAD(+) + NH4(+) + ATP = AMP + diphosphate + NAD(+) + H(+). It participates in cofactor biosynthesis; NAD(+) biosynthesis; NAD(+) from deamido-NAD(+) (ammonia route): step 1/1. Catalyzes the ATP-dependent amidation of deamido-NAD to form NAD. Uses ammonia as a nitrogen source. This Streptococcus thermophilus (strain ATCC BAA-250 / LMG 18311) protein is NH(3)-dependent NAD(+) synthetase.